The primary structure comprises 588 residues: Intracellular maltogenic amylase (588 aa).

Residues Asn-149, Ser-155, Gly-174, and Asp-176 each contribute to the Ca(2+) site. Substrate-binding residues include His-249 and Arg-325. Asp-327 serves as the catalytic Nucleophile. Residue Glu-356 is the Proton donor of the active site. Substrate is bound by residues 422–423 (HD), Asp-467, and Arg-471.

The protein belongs to the glycosyl hydrolase 13 family. BbmA subfamily. In terms of assembly, monomer or homodimer; in equilibrium. Ca(2+) is required as a cofactor.

It is found in the cytoplasm. Hydrolyzes beta-cyclodextrin to maltose and glucose, soluble starch to maltose and glucose, and pullulan to panose with trace amounts of maltose and glucose. It is also able to hydrolyze acarbose. Can also exhibit a transglycosylation activity transferring glucose or maltose to another moiety of sugars by forming alpha-(1,6)- and alpha-(1,3)-glycosidic linkages upon the hydrolysis of substrate at concentrations of 5% or higher. This chain is Intracellular maltogenic amylase (bbmA), found in Bacillus subtilis.